The following is a 675-amino-acid chain: Probable potassium transport system protein Kup (675 aa).

Basic and acidic residues predominate over residues 1–12 (MEPAMPEHDGDH). The disordered stretch occupies residues 1 to 25 (MEPAMPEHDGDHASNPPHGVGIPND). Helical transmembrane passes span 62 to 82 (ALLAVLGVVYGDIGTSPLYAL), 104 to 124 (LASLTFWALMLIVTIKYVILI), 153 to 173 (WLFGLVGIAGTCLFFGDSIIT), 195 to 215 (IIIPLAMVVLVALFSVQVLGT), 222 to 242 (FGPIMVCWFSVLAILGIKGIF), 255 to 275 (FALEFIVLHGYLSFIALGSVV), 300 to 320 (WLFFVLPSLTLNYFGQAALLI), 332 to 352 (LLVPHWAQIPMLVLATFATVI), 390 to 410 (IYLPSLNWILAFGALVLVLAF), 419 to 439 (AYGIAVTGTFLCTCVLAMVVF), 450 to 470 (VAIVFGFFFIVDSIFFSANVL), and 472 to 492 (IPDGGWVPLAIGIISTIIMTT).

The protein belongs to the HAK/KUP transporter (TC 2.A.72) family.

The protein resides in the cell inner membrane. It carries out the reaction K(+)(in) + H(+)(in) = K(+)(out) + H(+)(out). Transport of potassium into the cell. Likely operates as a K(+):H(+) symporter. The polypeptide is Probable potassium transport system protein Kup (Gluconobacter oxydans (strain 621H) (Gluconobacter suboxydans)).